The chain runs to 280 residues: uncharacterized protein (280 aa).

Positions 1 to 35 (MQGQVLKKVLKKYVHIGMCTLFLHAILLFPCVAQA) are cleaved as a signal peptide.

This is an uncharacterized protein from Treponema pallidum (strain Nichols).